The following is a 213-amino-acid chain: Ras-related protein RabK1 (213 aa).

Position 14 to 21 (Gly14 to Leu21) interacts with GTP. Positions Gly36–Phe43 match the Effector region motif. GTP-binding positions include Asn61 to Ser65 and Thr119 to Asp122.

The protein belongs to the small GTPase superfamily. Rab family.

The polypeptide is Ras-related protein RabK1 (rabK1) (Dictyostelium discoideum (Social amoeba)).